A 40-amino-acid chain; its full sequence is Photosystem II reaction center protein J (40 aa).

The chain crosses the membrane as a helical span at residues 8–28 (IPLWLISTVTGTLVIGLMGIF).

This sequence belongs to the PsbJ family. In terms of assembly, PSII is composed of 1 copy each of membrane proteins PsbA, PsbB, PsbC, PsbD, PsbE, PsbF, PsbH, PsbI, PsbJ, PsbK, PsbL, PsbM, PsbT, PsbX, PsbY, PsbZ, Psb30/Ycf12, at least 3 peripheral proteins of the oxygen-evolving complex and a large number of cofactors. It forms dimeric complexes.

It is found in the plastid. The protein resides in the chloroplast thylakoid membrane. Its function is as follows. One of the components of the core complex of photosystem II (PSII). PSII is a light-driven water:plastoquinone oxidoreductase that uses light energy to abstract electrons from H(2)O, generating O(2) and a proton gradient subsequently used for ATP formation. It consists of a core antenna complex that captures photons, and an electron transfer chain that converts photonic excitation into a charge separation. In Ginkgo biloba (Ginkgo), this protein is Photosystem II reaction center protein J.